The primary structure comprises 146 residues: Hemoglobin subunit beta-1 (146 aa).

Ser1 carries the N-acetylserine modification. Residues 2–146 form the Globin domain; sequence FLSAEEKGLV…VASALAHRYH (145 aa). Lys17 carries the N6-succinyllysine modification. Residues Ser44 and Ser50 each carry the phosphoserine modification. Lys59 is modified (N6-succinyllysine). Heme b contacts are provided by His63 and His92. Asymmetric dimethylarginine is present on Arg104.

Belongs to the globin family. In terms of assembly, heterotetramer of two alpha chains and two beta chains. As to expression, red blood cells.

Functionally, involved in oxygen transport from the lung to the various peripheral tissues. The chain is Hemoglobin subunit beta-1 (HBB1) from Panthera leo (Lion).